A 360-amino-acid polypeptide reads, in one-letter code: Mannose-1-phosphate guanylyltransferase catalytic subunit beta (360 aa).

The tract at residues 2 to 222 (KALILVGGYG…QGFWMDIGQP (221 aa)) is substrate-binding domain. Residue aspartate 110 coordinates GDP-alpha-D-mannose. Residue aspartate 110 participates in Mg(2+) binding. Lysine 162 is a catalytic residue. Aspartate 218 lines the GDP-alpha-D-mannose pocket. Aspartate 218 contacts Mg(2+). A hexapeptide repeat domain region spans residues 245 to 360 (CSGPGIVGNV…ESVPEPGIIM (116 aa)).

The protein belongs to the transferase hexapeptide repeat family. In terms of assembly, component of the GMPPA-GMPPB mannose-1-phosphate guanylyltransferase complex composed of 4 GMPPA subunits and 8 GMPPB subunits; the complex is organized into three layers, a central layer made up of 2 GMPPA dimers sandwiched between two layers each made up of 2 GMPPB dimers. GMPPB catalytic activity is reduced when part of the complex and binding of GDP-alpha-D-Mannose by GMPPA induces allosteric feedback inhibition of GMPPB. The cofactor is Mg(2+). Expressed in the liver (at protein level).

It localises to the cytoplasm. The enzyme catalyses alpha-D-mannose 1-phosphate + GTP + H(+) = GDP-alpha-D-mannose + diphosphate. Its pathway is nucleotide-sugar biosynthesis; GDP-alpha-D-mannose biosynthesis; GDP-alpha-D-mannose from alpha-D-mannose 1-phosphate (GTP route): step 1/1. Enzyme activity is reduced by incorporation into the GMPPA-GMPPB mannose-1-phosphate guanylyltransferase complex. Allosterically inhibited, when part of the GMPPA-GMPPB complex, by GDP-alpha-D-mannose binding to GMPPA. In terms of biological role, catalytic subunit of the GMPPA-GMPPB mannose-1-phosphate guanylyltransferase complex. Catalyzes the formation of GDP-mannose, an essential precursor of glycan moieties of glycoproteins and glycolipids. Can catalyze the reverse reaction in vitro. Together with GMPPA regulates GDP-alpha-D-mannose levels. The sequence is that of Mannose-1-phosphate guanylyltransferase catalytic subunit beta from Sus scrofa (Pig).